Consider the following 621-residue polypeptide: (-)-beta-phellandrene synthase 1, chloroplastic (621 aa).

The transit peptide at 1-49 (MALALVSVAPLVSMRRSLFSSPYELKSIDKTIPNLVMCRKRMSGTPSIR) directs the protein to the chloroplast. Positions 372, 376, and 524 each coordinate Mg(2+). Residues 372 to 376 (DDIYD) carry the DDXXD motif motif.

The protein belongs to the terpene synthase family. Tpsd subfamily. Requires Mg(2+) as cofactor. Mn(2+) serves as cofactor.

It is found in the plastid. It localises to the chloroplast. It catalyses the reaction (2E)-geranyl diphosphate = (-)-beta-phellandrene + diphosphate. The protein operates within terpene metabolism; oleoresin biosynthesis. Its pathway is secondary metabolite biosynthesis; terpenoid biosynthesis. In terms of biological role, monoterpene synthase (TPS) involved in the biosynthesis of monoterpene natural products included in conifer oleoresin secretions and volatile emissions; these compounds contribute to biotic and abiotic stress defense against herbivores and pathogens. Catalyzes the conversion of (2E)-geranyl diphosphate (GPP) to (-)-beta-phellandrene and, to a lower extent, to (-)-alpha-phellandrene. This Pinus contorta (Shore pine) protein is (-)-beta-phellandrene synthase 1, chloroplastic.